A 456-amino-acid chain; its full sequence is MSARLAAIVLAAGKGTRMRSTLPKVLHPLAGSTILERVLAALGELALAECFIVVGQGAELVRGRIARPGVQFVEQTEQRGTGHAVQQVIPHLEGFEGEVLVLNGDAPLLRPSTVAHLVEKHRSFAADATILAARIADPGGYGRVFLDADGRVRQVIEDRDCTEEQRRNDLINGGVYCFRWPALMTVLPALSADNDQGELYLPDALPMLTHVRAVAVEDPQEIFGINDRLQLSQASRILNERTLVGLMLSGVTIVDPLRVTIDETVEIEPDVVIEPETHLRGATRIAGGCRIGPGTLLEDTVVGAGTEILYSVLRRSRVGAHSTIGPYSHLRPGADVGSHCRVGNYVEIKNATIGDHTNAAHLSYVGDASVGERVNFGAGTIVVNYDGKHKHRTEIGDGVRTGANSCLVAPLKLGDGVTVAAGSTVTEDVPCGLVIARSRQVVKPDWKAPYERTEDG.

The interval 1–228 (MSARLAAIVL…PQEIFGINDR (228 aa)) is pyrophosphorylase. UDP-N-acetyl-alpha-D-glucosamine-binding positions include 10–13 (LAAG), Lys-24, Gln-75, and 80–81 (GT). Asp-105 contacts Mg(2+). Residues Gly-142, Glu-157, Asn-172, and Asn-226 each contribute to the UDP-N-acetyl-alpha-D-glucosamine site. Residue Asn-226 participates in Mg(2+) binding. The interval 229–249 (LQLSQASRILNERTLVGLMLS) is linker. Positions 250 to 456 (GVTIVDPLRV…KAPYERTEDG (207 aa)) are N-acetyltransferase. The UDP-N-acetyl-alpha-D-glucosamine site is built by Arg-331 and Lys-349. His-361 functions as the Proton acceptor in the catalytic mechanism. Positions 364 and 375 each coordinate UDP-N-acetyl-alpha-D-glucosamine. Acetyl-CoA contacts are provided by residues Ala-378, 384–385 (NY), Ala-421, and Arg-437.

This sequence in the N-terminal section; belongs to the N-acetylglucosamine-1-phosphate uridyltransferase family. The protein in the C-terminal section; belongs to the transferase hexapeptide repeat family. As to quaternary structure, homotrimer. It depends on Mg(2+) as a cofactor.

It localises to the cytoplasm. The enzyme catalyses alpha-D-glucosamine 1-phosphate + acetyl-CoA = N-acetyl-alpha-D-glucosamine 1-phosphate + CoA + H(+). It catalyses the reaction N-acetyl-alpha-D-glucosamine 1-phosphate + UTP + H(+) = UDP-N-acetyl-alpha-D-glucosamine + diphosphate. It functions in the pathway nucleotide-sugar biosynthesis; UDP-N-acetyl-alpha-D-glucosamine biosynthesis; N-acetyl-alpha-D-glucosamine 1-phosphate from alpha-D-glucosamine 6-phosphate (route II): step 2/2. The protein operates within nucleotide-sugar biosynthesis; UDP-N-acetyl-alpha-D-glucosamine biosynthesis; UDP-N-acetyl-alpha-D-glucosamine from N-acetyl-alpha-D-glucosamine 1-phosphate: step 1/1. It participates in bacterial outer membrane biogenesis; LPS lipid A biosynthesis. Its function is as follows. Catalyzes the last two sequential reactions in the de novo biosynthetic pathway for UDP-N-acetylglucosamine (UDP-GlcNAc). The C-terminal domain catalyzes the transfer of acetyl group from acetyl coenzyme A to glucosamine-1-phosphate (GlcN-1-P) to produce N-acetylglucosamine-1-phosphate (GlcNAc-1-P), which is converted into UDP-GlcNAc by the transfer of uridine 5-monophosphate (from uridine 5-triphosphate), a reaction catalyzed by the N-terminal domain. This chain is Bifunctional protein GlmU, found in Gloeobacter violaceus (strain ATCC 29082 / PCC 7421).